The sequence spans 152 residues: UPF0178 protein YaiI (152 aa).

It belongs to the UPF0178 family.

In Shigella boydii serotype 18 (strain CDC 3083-94 / BS512), this protein is UPF0178 protein YaiI.